The primary structure comprises 190 residues: Probable thymidylate kinase (190 aa).

7-14 (GIDGAGKT) contacts ATP.

The protein belongs to the thymidylate kinase family.

The enzyme catalyses dTMP + ATP = dTDP + ADP. The polypeptide is Probable thymidylate kinase (Thermoplasma volcanium (strain ATCC 51530 / DSM 4299 / JCM 9571 / NBRC 15438 / GSS1)).